The following is a 255-amino-acid chain: 3-deoxy-manno-octulosonate cytidylyltransferase (255 aa).

This sequence belongs to the KdsB family.

The protein localises to the cytoplasm. It catalyses the reaction 3-deoxy-alpha-D-manno-oct-2-ulosonate + CTP = CMP-3-deoxy-beta-D-manno-octulosonate + diphosphate. The protein operates within nucleotide-sugar biosynthesis; CMP-3-deoxy-D-manno-octulosonate biosynthesis; CMP-3-deoxy-D-manno-octulosonate from 3-deoxy-D-manno-octulosonate and CTP: step 1/1. It functions in the pathway bacterial outer membrane biogenesis; lipopolysaccharide biosynthesis. Its function is as follows. Activates KDO (a required 8-carbon sugar) for incorporation into bacterial lipopolysaccharide in Gram-negative bacteria. This is 3-deoxy-manno-octulosonate cytidylyltransferase from Pelobacter propionicus (strain DSM 2379 / NBRC 103807 / OttBd1).